Here is a 319-residue protein sequence, read N- to C-terminus: Oxaloacetate tautomerase fahd2, mitochondrial (319 aa).

A mitochondrion-targeting transit peptide spans 1-31 (MLTQTRVALRVLKNAHLTLPKRNISQSPALS). Mg(2+)-binding residues include Glu164, Glu166, and Asp195.

It belongs to the FAH family. Mg(2+) serves as cofactor. The cofactor is Mn(2+).

It is found in the mitochondrion. It catalyses the reaction oxaloacetate = enol-oxaloacetate. Tautomerase that converts enol-oxaloacetate, a strong inhibitor of succinate dehydrogenase, to the physiological keto form of oxaloacetate. It is thereby required to maximize aerobic respiration efficiency by preventing succinate dehydrogenase inhibition. The sequence is that of Oxaloacetate tautomerase fahd2, mitochondrial (fahd2) from Xenopus laevis (African clawed frog).